The following is a 437-amino-acid chain: MLQDPDSDQPLNSLDVKPLRKPRIPMETFRKVGIPIIIALLSLASIIIVVVLIKVILDKYYFLCGQPLHFIPRKQLCDGELDCPLGEDEEHCVKSFPEGPAVAVRLSKDRSTLQVLDSATGNWFSACFDNFTEALAETACRQMGYSSKPTFRAVEIGPDQDLDVVEITENSQELRMRNSSGPCLSGSLVSLHCLACGKSLKTPRVVGVEEASVDSWPWQVSIQYDKQHVCGGSILDPHWVLTAAHCFRKHTDVFNWKVRAGSDKLGSFPSLAVAKIIIIEFNPMYPKDNDIALMKLQFPLTFSGTVRPICLPFFDEELTPATPLWIIGWGFTKQNGGKMSDILLQASVQVIDSTRCNADDAYQGEVTEKMMCAGIPEGGVDTCQGDSGGPLMYQSDQWHVVGIVSWGYGCGGPSTPGVYTKVSAYLNWIYNVWKAEL.

Residues Met-1–Val-32 lie on the Cytoplasmic side of the membrane. A helical; Signal-anchor for type II membrane protein membrane pass occupies residues Gly-33–Ile-53. Residues Lys-54–Leu-437 lie on the Extracellular side of the membrane. An LDL-receptor class A domain is found at Tyr-61–Val-93. Cystine bridges form between Cys-64/Cys-83, Cys-77/Cys-92, Cys-127/Cys-183, Cys-140/Cys-193, Cys-196/Cys-310, Cys-230/Cys-246, Cys-356/Cys-372, and Cys-383/Cys-410. Residues Lys-94–Arg-204 form the SRCR domain. Residues Asn-130 and Asn-178 are each glycosylated (N-linked (GlcNAc...) asparagine). The Peptidase S1 domain maps to Val-205 to Lys-434. Catalysis depends on charge relay system residues His-245 and Asp-290. Residue Ser-387 is the Charge relay system of the active site.

Belongs to the peptidase S1 family. Post-translationally, proteolytically processed; probably by an autocatalytic mechanism. High levels in pancreatic, gastric, colorectal and ampullary cancer. Very weak expression in normal gastrointestinal and urogenital tract. Coexpressed with ACE2 within mature enterocytes.

Its subcellular location is the cell membrane. The protein localises to the secreted. Plasma membrane-anchored serine protease that directly induces processing of pro-uPA/PLAU into the active form through proteolytic activity. Seems to be capable of activating ENaC. Functionally, (Microbial infection) In gut epithelial cells, facilitates human coronavirus SARS-CoV-2 infection through, at least, the cleavage of coronavirus spike glycoproteins which activates the glycoprotein for host cell entry. This chain is Transmembrane protease serine 4, found in Homo sapiens (Human).